Consider the following 453-residue polypeptide: Tubulin gamma chain (453 aa).

142 to 148 provides a ligand contact to GTP; that stretch reads AGGTGSG.

This sequence belongs to the tubulin family.

It localises to the cytoplasm. It is found in the cytoskeleton. The protein localises to the microtubule organizing center. The protein resides in the spindle pole body. Its function is as follows. Tubulin is the major constituent of microtubules. The gamma chain is found at microtubule organizing centers (MTOC) such as the spindle poles or the centrosome, suggesting that it is involved in the minus-end nucleation of microtubule assembly. The sequence is that of Tubulin gamma chain (TUB4) from Coprinopsis cinerea (strain Okayama-7 / 130 / ATCC MYA-4618 / FGSC 9003) (Inky cap fungus).